The chain runs to 235 residues: FsC-acetyl coenzyme A-N(2)-transacetylase (235 aa).

Positions 14–190 constitute an N-acetyltransferase domain; it reads LELVPLGHEH…RYSITREEWL (177 aa). CoA-binding positions include 106 to 108, Gly114, Asn146, and 151 to 153; these read FRV and AVM.

It functions in the pathway siderophore biosynthesis. Functionally, fsC-acetyl coenzyme A-N(2)-transacetylase; part of the siderophore biosynthetic pathway. Aspergillus fumigatus produces 4 types of siderophores, low-molecular-mass iron chelators, including excreted fusarinine C (FsC) and triacetylfusarinine C (TAFC) for iron uptake and intacellular ferricrocin (FC) for hyphal and hydroxyferricrocin (HFC) for conidial iron distribution and storage. TAFC consists of 3 N(2)-acetyl-N(5)-anhydromevalonyl-N(5)-hydroxyornithine residues cyclically linked by ester bonds; FC is a cyclic hexapeptide with the structure Gly-Ser-Gly-(N(5)-acetyl-N(5)-hydroxyornithine)x3. The biosynthesis of all four siderophores depends on the hydroxylation of ornithine, catalyzed by the monooxygenase sidA. Subsequently, the pathways for biosynthesis of extra- and intracellular siderophores split. For biosynthesis of extracellular siderophores, the transacylase sidF transfers anhydromevalonyl to N(5)-hydroxyornithine. The required anhydromevalonyl-CoA moiety is derived from mevalonate by CoA ligation and dehydration catalyzed by sidI and sidH respectively. The acetylation of N(5)-hydroxyornithine for FC biosynthesis involves the constitutively expressed sidL. FC is hydroxylated to HFC by an as yet uncharacterized enzyme during conidiation. Assembly of fusarinine C (FsC) and FC is catalyzed by two different nonribosomal peptide synthetases (NRPS), sidD and sidC respectively. Subsequently, sidG catalyzes N2-acetylation of FsC for forming TAFC. Both extra- and intracellular siderophores are crucial for growth during iron limitation and virulence. The protein is FsC-acetyl coenzyme A-N(2)-transacetylase of Aspergillus fumigatus (strain ATCC MYA-4609 / CBS 101355 / FGSC A1100 / Af293) (Neosartorya fumigata).